Reading from the N-terminus, the 193-residue chain is Outer membrane lipoprotein DolP (193 aa).

The signal sequence occupies residues 1–21; it reads MTLSPLKKLAILLGATIFLQG. A lipid anchor (N-palmitoyl cysteine) is attached at cysteine 22. Cysteine 22 is lipidated: S-diacylglycerol cysteine. 2 BON domains span residues 48 to 117 and 126 to 193; these read DDET…TVSP and KDSW…KYLD.

It belongs to the lipoprotein DolP family.

The protein resides in the cell outer membrane. In terms of biological role, plays an important role in maintaining outer membrane integrity. The protein is Outer membrane lipoprotein DolP of Haemophilus influenzae (strain ATCC 51907 / DSM 11121 / KW20 / Rd).